The chain runs to 713 residues: Ribosomal RNA large subunit methyltransferase K/L (713 aa).

The 112-residue stretch at 43 to 154 folds into the THUMP domain; sequence LLYRALLWSR…RDQVMLSLDL (112 aa).

It belongs to the methyltransferase superfamily. RlmKL family.

The protein resides in the cytoplasm. It carries out the reaction guanosine(2445) in 23S rRNA + S-adenosyl-L-methionine = N(2)-methylguanosine(2445) in 23S rRNA + S-adenosyl-L-homocysteine + H(+). It catalyses the reaction guanosine(2069) in 23S rRNA + S-adenosyl-L-methionine = N(2)-methylguanosine(2069) in 23S rRNA + S-adenosyl-L-homocysteine + H(+). Specifically methylates the guanine in position 2445 (m2G2445) and the guanine in position 2069 (m7G2069) of 23S rRNA. The sequence is that of Ribosomal RNA large subunit methyltransferase K/L from Sodalis glossinidius (strain morsitans).